The following is a 357-amino-acid chain: Cyclic AMP-responsive element-binding protein 5 (357 aa).

Positions 114-239 (RQDQTPHHHL…FLERNRAAAT (126 aa)) are disordered. Basic residues-rich tracts occupy residues 120–129 (HHHLHSHPHQ) and 138–175 (PYPH…HPAH). Polar residues predominate over residues 186–195 (TGNQAQVSPA). Low complexity predominate over residues 196-206 (TQQMQPTQTIQ). The span at 218-235 (VVDEDPDERRRKFLERNR) shows a compositional bias: basic and acidic residues. The bZIP domain occupies 224 to 287 (DERRRKFLER…AQLKQLLLTH (64 aa)). The segment at 226–246 (RRRKFLERNRAAATRCRQKRK) is basic motif. The segment at 252–280 (LEKKAEELTQTNMQLQNEVSMLKNEVAQL) is leucine-zipper. Residues 298–318 (ESQGYLSPESSPPASPVPACS) form a disordered region.

It belongs to the bZIP family. Binds DNA as a homodimer or as a heterodimer with JUN or ATF2/CREBP1.

It is found in the nucleus. In terms of biological role, binds to the cAMP response element and activates transcription. The polypeptide is Cyclic AMP-responsive element-binding protein 5 (Creb5) (Mus musculus (Mouse)).